Reading from the N-terminus, the 342-residue chain is N-acetyl-gamma-glutamyl-phosphate reductase (342 aa).

The active site involves Cys-149.

It belongs to the NAGSA dehydrogenase family. Type 1 subfamily.

Its subcellular location is the cytoplasm. The enzyme catalyses N-acetyl-L-glutamate 5-semialdehyde + phosphate + NADP(+) = N-acetyl-L-glutamyl 5-phosphate + NADPH + H(+). It participates in amino-acid biosynthesis; L-arginine biosynthesis; N(2)-acetyl-L-ornithine from L-glutamate: step 3/4. Functionally, catalyzes the NADPH-dependent reduction of N-acetyl-5-glutamyl phosphate to yield N-acetyl-L-glutamate 5-semialdehyde. This chain is N-acetyl-gamma-glutamyl-phosphate reductase, found in Rhodobacter capsulatus (strain ATCC BAA-309 / NBRC 16581 / SB1003).